A 294-amino-acid chain; its full sequence is Bifunctional protein FolD (294 aa).

NADP(+) contacts are provided by residues 164-166 (GRS), S193, and I234.

The protein belongs to the tetrahydrofolate dehydrogenase/cyclohydrolase family. Homodimer.

It catalyses the reaction (6R)-5,10-methylene-5,6,7,8-tetrahydrofolate + NADP(+) = (6R)-5,10-methenyltetrahydrofolate + NADPH. The enzyme catalyses (6R)-5,10-methenyltetrahydrofolate + H2O = (6R)-10-formyltetrahydrofolate + H(+). Its pathway is one-carbon metabolism; tetrahydrofolate interconversion. In terms of biological role, catalyzes the oxidation of 5,10-methylenetetrahydrofolate to 5,10-methenyltetrahydrofolate and then the hydrolysis of 5,10-methenyltetrahydrofolate to 10-formyltetrahydrofolate. The sequence is that of Bifunctional protein FolD from Flavobacterium psychrophilum (strain ATCC 49511 / DSM 21280 / CIP 103535 / JIP02/86).